The chain runs to 482 residues: 23S rRNA (uracil(1939)-C(5))-methyltransferase RlmD (482 aa).

The tract at residues 1–33 is disordered; that stretch reads MANLFKQSRAKQKNKTTPSQTQTSTKGSARANA. Positions 15–28 are enriched in low complexity; that stretch reads KTTPSQTQTSTKGS. In terms of domain architecture, TRAM spans 51–108; sequence TAQDANNNAITIQELDWMGQGVARGATMYFVEGALPGETCDIEVVSSKKKVVSAKTIS. 4 residues coordinate [4Fe-4S] cluster: cysteine 121, cysteine 127, cysteine 130, and cysteine 208. Residues glutamine 313, phenylalanine 342, asparagine 347, glutamate 363, aspartate 390, and aspartate 411 each coordinate S-adenosyl-L-methionine. Residue cysteine 437 is the Nucleophile of the active site.

The protein belongs to the class I-like SAM-binding methyltransferase superfamily. RNA M5U methyltransferase family. RlmD subfamily.

It catalyses the reaction uridine(1939) in 23S rRNA + S-adenosyl-L-methionine = 5-methyluridine(1939) in 23S rRNA + S-adenosyl-L-homocysteine + H(+). Catalyzes the formation of 5-methyl-uridine at position 1939 (m5U1939) in 23S rRNA. This Alteromonas mediterranea (strain DSM 17117 / CIP 110805 / LMG 28347 / Deep ecotype) protein is 23S rRNA (uracil(1939)-C(5))-methyltransferase RlmD.